Reading from the N-terminus, the 133-residue chain is Putative elongation factor 1-delta-like protein (133 aa).

Residues 58–73 (SLAGSLGPGASSGPSG) are compositionally biased toward low complexity. 2 disordered regions span residues 58–77 (SLAG…DHSE) and 89–133 (NQRD…TSRG). The span at 89 to 102 (NQRDLAERAGEELA) shows a compositional bias: basic and acidic residues.

This sequence belongs to the EF-1-beta/EF-1-delta family.

The polypeptide is Putative elongation factor 1-delta-like protein (EEF1DP3) (Homo sapiens (Human)).